We begin with the raw amino-acid sequence, 101 residues long: Omega-scoloptoxin(10)-Ssd1b (101 aa).

A signal peptide spans 1 to 23 (MNKLTIIFFTILLLTYIIVEKEA).

In terms of processing, contains 3 disulfide bonds. Expressed by the venom gland.

It is found in the secreted. Its function is as follows. Voltage-gated calcium channel inhibitor. The chain is Omega-scoloptoxin(10)-Ssd1b from Scolopendra dehaani (Thai centipede).